Reading from the N-terminus, the 311-residue chain is Probable flavin reductase (311 aa).

FMN contacts are provided by residues 38–41 (TANS), 55–61 (CLAKSSR), 88–89 (FA), and Arg95.

The protein belongs to the non-flavoprotein flavin reductase family.

The protein is Probable flavin reductase of Rhizobium meliloti (strain 1021) (Ensifer meliloti).